We begin with the raw amino-acid sequence, 818 residues long: Actin filament-associated protein 1-like 2 (818 aa).

The residue at position 56 (Tyr-56) is a Phosphotyrosine. The interval 66-163 (QNAESQGKAP…SKGKSAPYQW (98 aa)) is disordered. A compositionally biased stretch (polar residues) spans 85 to 94 (EPSQHSSAPQ). A compositionally biased stretch (acidic residues) spans 123–139 (YYEEAEPYDTSLNEDGE). 2 consecutive PH domains span residues 175–271 (DARI…EVSG) and 353–447 (SLET…SESG). Ser-408 carries the post-translational modification Phosphoserine. Tyr-413 bears the Phosphotyrosine mark. Ser-484 is subject to Phosphoserine. The disordered stretch occupies residues 513–532 (AAVEPTEEATPVADDPNERE). Residues 652 to 749 (AEIKLGKNRT…VKDNLKKAEA (98 aa)) adopt a coiled-coil conformation. The segment at 765 to 787 (NVSPRPKAVTPASAPDCTPVNSA) is disordered.

Interacts with SRC. Interacts with LCK when tyrosine phosphorylated. Tyrosine phosphorylated (by SRC). As to expression, detected in spleen and thyroid, and at lower levels in kidney, brain, lung and pancreas.

Its subcellular location is the cytoplasm. In terms of biological role, may play a role in a signaling cascade by enhancing the kinase activity of SRC. Contributes to SRC-regulated transcription activation. The chain is Actin filament-associated protein 1-like 2 (AFAP1L2) from Homo sapiens (Human).